A 587-amino-acid chain; its full sequence is Vesicular glutamate transporter 2.2 (587 aa).

The Cytoplasmic portion of the chain corresponds to 1 to 71 (MDTVKERVLA…CTCFGLPRRY (71 aa)). Residues 72–92 (IIAIMSGLGFCISFGIRCNLG) form a helical membrane-spanning segment. The Vesicular segment spans residues 93–125 (VAIVDMVNNSTIHKGGKIIIKGKAKFNWDPETV). Asn-100 and Asn-101 each carry an N-linked (GlcNAc...) asparagine glycan. Residues 126 to 146 (GMIHGSFFWGYTVTQIPGGYI) form a helical membrane-spanning segment. The Cytoplasmic segment spans residues 147–149 (SSR). Residues 150–170 (LAANRVFGAAILLTSTLNMFI) traverse the membrane as a helical segment. Residues 171-180 (PSAARVHYGC) lie on the Vesicular side of the membrane. Residues 181 to 203 (VMFVRILQGLVEGVTYPACHGIW) form a helical membrane-spanning segment. At 204-217 (SKWAPPLERSRLAT) the chain is on the cytoplasmic side. The helical transmembrane segment at 218 to 238 (TSFCGSYAGAVVAMPLAGILV) threads the bilayer. Topologically, residues 239-245 (QYSGWSS) are vesicular. The helical transmembrane segment at 246–266 (VFYIYGSFGIVWYMFWILVSY) threads the bilayer. The Cytoplasmic segment spans residues 267–311 (ESPADHPTITDEERTYIEESIGESAKLLGAMEKYKTPWRKFFTSM). The chain crosses the membrane as a helical span at residues 312-332 (PVYAIIVANFCRSWTFYLLLI). Topologically, residues 333–350 (SQPAYFEEVFGFEISKVG) are vesicular. The chain crosses the membrane as a helical span at residues 351-371 (MVSALPHLVMTIIVPIGGQLA). Residues 372–387 (DYLRSKNILTTTTVRK) lie on the Cytoplasmic side of the membrane. A helical transmembrane segment spans residues 388-408 (IMNCGGFGMEATLLLVVGFSH). Over 409–410 (SK) the chain is Vesicular. The chain crosses the membrane as a helical span at residues 411–431 (GVAISFLVLAVGFSGFAISGF). Over 432–444 (NVNHLDIAPRYAS) the chain is Cytoplasmic. Residues 445-465 (ILMGISNGVGTLSGMVCPLIV) form a helical membrane-spanning segment. Residues 466 to 479 (GAMTKNKTREEWQN) lie on the Vesicular side of the membrane. An N-linked (GlcNAc...) asparagine glycan is attached at Asn-471. A helical transmembrane segment spans residues 480-500 (VFLIASLVHYGGVIFYGIFAS). Topologically, residues 501–587 (GEKQPWADPE…ERTYTGDGYS (87 aa)) are cytoplasmic.

The protein belongs to the major facilitator superfamily. Sodium/anion cotransporter family. VGLUT subfamily. Expressed in spinal cord.

It is found in the cytoplasmic vesicle. The protein resides in the secretory vesicle. Its subcellular location is the synaptic vesicle membrane. The protein localises to the membrane. It localises to the synapse. It is found in the synaptosome. The protein resides in the cell membrane. The enzyme catalyses L-glutamate(out) = L-glutamate(in). It carries out the reaction 3 Na(+)(out) + phosphate(out) = 3 Na(+)(in) + phosphate(in). It catalyses the reaction phosphate(in) = phosphate(out). The catalysed reaction is K(+)(in) + H(+)(out) = K(+)(out) + H(+)(in). The enzyme catalyses chloride(in) = chloride(out). With respect to regulation, chloride channel activity is allosterically activated by lumenal H(+) and Cl(-) leading to synaptic vesicles acidification. The L-glutamate transport activity is allosterically activated by lumenal H(+) and Cl(-). The allosteric requirement for H(+) efficiently prevents non-vesicular efflux across the plasma membrane. The L-glutamate uniporter activity exhibits a biphasic dependence on chloride concentration. Its function is as follows. Multifunctional transporter that transports L-glutamate as well as multiple ions such as chloride, proton, potassium, sodium and phosphate. At the synaptic vesicle membrane, mainly functions as a uniporter which transports preferentially L-glutamate but also, phosphate from the cytoplasm into synaptic vesicles at presynaptic nerve terminals of excitatory neural cells. The L-glutamate or phosphate uniporter activity is electrogenic and is driven by the proton electrochemical gradient, mainly by the electrical gradient established by the vacuolar H(+)-ATPase across the synaptic vesicle membrane. In addition, functions as a chloride channel that allows a chloride permeation through the synaptic vesicle membrane therefore affects the proton electrochemical gradient and promotes synaptic vesicles acidification. Moreover, functions as a vesicular K(+)/H(+) antiport allowing to maintain the electrical gradient and to decrease chemical gradient and therefore sustain vesicular L-glutamate uptake. The vesicular H(+)/H(+) antiport activity is electroneutral. At the plasma membrane, following exocytosis, functions as a symporter of Na(+) and phosphate from the extracellular space to the cytoplasm allowing synaptic phosphate homeostasis regulation. The symporter activity is driven by an inside negative membrane potential and is electrogenic. Also involved in the regulation of retinal hyaloid vessel regression during postnatal development. May also play a role in the endocrine L-glutamatergic system of other tissues such as pineal gland and pancreas. The chain is Vesicular glutamate transporter 2.2 (slc17a6a) from Danio rerio (Zebrafish).